We begin with the raw amino-acid sequence, 875 residues long: cGMP-specific 3',5'-cyclic phosphodiesterase (875 aa).

2 disordered regions span residues 1 to 29 (MERA…DQDS) and 78 to 102 (SCSC…RKIS). The segment covering 10-22 (QQRQQQQPQQQKQ) has biased composition (low complexity). Polar residues predominate over residues 78 to 101 (SCSCPLQQSPRADNSAPGTPTRKI). Position 102 is a phosphoserine (S102). GAF domains follow at residues 164 to 314 (DVTA…GIVL) and 346 to 503 (SLEV…GLGI). The PDEase domain occupies 536–860 (ETRELQSLAA…QKWQALAEQQ (325 aa)). The active-site Proton donor is H613. Zn(2+) is bound by residues H617, H653, D654, and D764. Mg(2+) is bound at residue D654. Q817 contacts 3',5'-cyclic GMP.

This sequence belongs to the cyclic nucleotide phosphodiesterase family. The cofactor is Zn(2+). Mg(2+) serves as cofactor. Phosphorylation is regulated by binding of cGMP to the two allosteric sites. Phosphorylation by PRKG1 leads to its activation. Expressed in aortic smooth muscle cells, heart, placenta, skeletal muscle and pancreas and, to a much lesser extent, in brain, liver and lung.

The enzyme catalyses 3',5'-cyclic GMP + H2O = GMP + H(+). It participates in purine metabolism; 3',5'-cyclic GMP degradation; GMP from 3',5'-cyclic GMP: step 1/1. Sildenafil (Viagra) is a highly selective and potent inhibitor of PDE5A and is effective in the treatment of penile erectile dysfunction. Also inhibited by zaprinast. Functionally, plays a role in signal transduction by regulating the intracellular concentration of cyclic nucleotides. This phosphodiesterase catalyzes the specific hydrolysis of cGMP to 5'-GMP. Specifically regulates nitric-oxide-generated cGMP. The protein is cGMP-specific 3',5'-cyclic phosphodiesterase of Homo sapiens (Human).